A 207-amino-acid chain; its full sequence is PITH domain-containing protein P35G2.02 (207 aa).

In terms of domain architecture, PITH spans 13–189 (EHPFESGPND…PVVTIYEATP (177 aa)).

This sequence belongs to the PITHD1 family.

Its subcellular location is the cytoplasm. It localises to the nucleus. This Schizosaccharomyces pombe (strain 972 / ATCC 24843) (Fission yeast) protein is PITH domain-containing protein P35G2.02.